The chain runs to 340 residues: Anthranilate phosphoribosyltransferase (340 aa).

5-phospho-alpha-D-ribose 1-diphosphate-binding positions include G84, 87–88 (GD), T92, 94–97 (NIST), 112–120 (KHGSRSVSS), and S124. Residue G84 participates in anthranilate binding. S96 is a binding site for Mg(2+). Residue R170 coordinates anthranilate. Residues D228 and E229 each coordinate Mg(2+).

The protein belongs to the anthranilate phosphoribosyltransferase family. Homodimer. The cofactor is Mg(2+).

It catalyses the reaction N-(5-phospho-beta-D-ribosyl)anthranilate + diphosphate = 5-phospho-alpha-D-ribose 1-diphosphate + anthranilate. It participates in amino-acid biosynthesis; L-tryptophan biosynthesis; L-tryptophan from chorismate: step 2/5. Catalyzes the transfer of the phosphoribosyl group of 5-phosphorylribose-1-pyrophosphate (PRPP) to anthranilate to yield N-(5'-phosphoribosyl)-anthranilate (PRA). This Psychromonas ingrahamii (strain DSM 17664 / CCUG 51855 / 37) protein is Anthranilate phosphoribosyltransferase.